The chain runs to 177 residues: MGCPEVQDRPGSGYELEETPAPVPVEPCLGSRPWTLSGGLSMVLKNIKYALKNIPKERVTRLCPEVESPLSERFRGLQTLDKSKCIGCGICANTCPNSAIKIVKAPIAPGSEKKRWFPQIDIGHCLFCGLCIDQCPKGALSSGKEYCKGMVKWAHKDLLMTPEKLAREVDIQEGDER.

Residues 1–21 (MGCPEVQDRPGSGYELEETPA) form a disordered region. 2 4Fe-4S ferredoxin-type domains span residues 76 to 105 (GLQT…IVKA) and 116 to 145 (WFPQ…SGKE). 8 residues coordinate [4Fe-4S] cluster: cysteine 85, cysteine 88, cysteine 91, cysteine 95, cysteine 125, cysteine 128, cysteine 131, and cysteine 135.

It belongs to the complex I 23 kDa subunit family. The FPO complex is composed of at least 13 different subunits. [4Fe-4S] cluster serves as cofactor.

It catalyses the reaction methanophenazine + reduced coenzyme F420-(gamma-L-Glu)(n) = dihydromethanophenazine + oxidized coenzyme F420-(gamma-L-Glu)(n) + H(+). Its function is as follows. Component of the F(420)H(2) dehydrogenase (FPO complex) which is part of the energy-conserving F(420)H(2):heterodisulfide oxidoreductase system. The membrane-bound electron transfer system of the complex plays an important role in the metabolism of methylotrophic methanogens when the organisms grow on methanol or methylamines. Catalyzes the oxidation of methanophenazine to dihydromethanophenazine. It shuttles electrons from F(420)H(2), via FAD and iron-sulfur (Fe-S) centers, to methanophenazine (an electron carrier in the membrane). It couples the redox reaction to proton translocation (for every two electrons transferred, two hydrogen ions are translocated across the cytoplasmic membrane), and thus conserves the redox energy in a proton gradient. It also catalyzes the oxidation of F(420)H(2) with quinones such as 2,3-dimethyl-1,4-naphthoquinone, 2-methyl-1,4-naphthoquinone and tetramethyl-p-benzoquinone. The polypeptide is F(420)H(2) dehydrogenase subunit I (fpoI) (Methanosarcina mazei (strain ATCC BAA-159 / DSM 3647 / Goe1 / Go1 / JCM 11833 / OCM 88) (Methanosarcina frisia)).